Here is a 247-residue protein sequence, read N- to C-terminus: UPF0259 membrane protein BU276 (247 aa).

The next 6 membrane-spanning stretches (helical) occupy residues 20–40 (IGAI…IDMF), 85–105 (IMES…LISV), 114–134 (IVSS…LNFL), 137–157 (FIIQ…SIIL), 188–208 (IIGP…MLLA), and 218–238 (LFLI…IYLF).

This sequence belongs to the UPF0259 family.

The protein resides in the cell membrane. The polypeptide is UPF0259 membrane protein BU276 (Buchnera aphidicola subsp. Acyrthosiphon pisum (strain APS) (Acyrthosiphon pisum symbiotic bacterium)).